The following is a 420-amino-acid chain: Histidine--tRNA ligase (420 aa).

The protein belongs to the class-II aminoacyl-tRNA synthetase family. As to quaternary structure, homodimer.

It localises to the cytoplasm. It catalyses the reaction tRNA(His) + L-histidine + ATP = L-histidyl-tRNA(His) + AMP + diphosphate + H(+). The polypeptide is Histidine--tRNA ligase (Anaplasma phagocytophilum (strain HZ)).